The chain runs to 121 residues: uncharacterized protein (121 aa).

One can recognise a CHCH domain in the interval 43 to 86 (LKECSSHVAAFADCSKDKYISVVWECRELQQLMKNCLVEYTTSE). Short sequence motifs (cx9C motif) lie at residues 46–56 (CSSHVAAFADC) and 68–78 (CRELQQLMKNC). 2 cysteine pairs are disulfide-bonded: Cys-46/Cys-78 and Cys-56/Cys-68.

This sequence belongs to the CMC family.

This is an uncharacterized protein from Dictyostelium discoideum (Social amoeba).